The primary structure comprises 262 residues: (5R,7aS)-5-hydroxy-7a-methyl-1-oxo-2,3,5,6,7,7a-hexahydro-1H-indene-carboxyl-CoA reductase (262 aa).

NAD(+) contacts are provided by aspartate 50, aspartate 77, valine 78, asparagine 104, tyrosine 170, lysine 174, and alanine 203. Tyrosine 170 (proton acceptor) is an active-site residue.

It belongs to the short-chain dehydrogenases/reductases (SDR) family.

The enzyme catalyses (5R,7aS)-5-hydroxy-7a-methyl-1-oxo-2,3,5,6,7,7a-hexahydro-1H-indene-carboxyl-CoA + NAD(+) = (7aS)-7a-methyl-1,5-dioxo-2,3,5,6,7,7a-hexahydro-1H-indene-carboxyl-CoA + NADH + H(+). The protein operates within steroid metabolism; cholesterol degradation. Its activity is regulated as follows. Requires the presence of IpdC. Its function is as follows. Involved in the final steps of cholesterol and steroid degradation. Probably catalyzes the oxidation of the 5-OH group of (5R,7aS)-5-hydroxy-7a-methyl-1-oxo-2,3,5,6,7,7a-hexahydro-1H-indene-carboxyl-CoA, leading to the formation of HIEC-CoA. The chain is (5R,7aS)-5-hydroxy-7a-methyl-1-oxo-2,3,5,6,7,7a-hexahydro-1H-indene-carboxyl-CoA reductase from Mycobacterium tuberculosis (strain ATCC 25618 / H37Rv).